A 236-amino-acid polypeptide reads, in one-letter code: Uridylate kinase (236 aa).

Position 10–13 (10–13 (KLSG)) interacts with ATP. Gly52 provides a ligand contact to UMP. ATP contacts are provided by Gly53 and Arg57. UMP is bound by residues Asp72 and 133 to 140 (TGNPFFTT). 3 residues coordinate ATP: Thr160, Tyr166, and Asp169.

The protein belongs to the UMP kinase family. As to quaternary structure, homohexamer.

Its subcellular location is the cytoplasm. The enzyme catalyses UMP + ATP = UDP + ADP. The protein operates within pyrimidine metabolism; CTP biosynthesis via de novo pathway; UDP from UMP (UMPK route): step 1/1. With respect to regulation, inhibited by UTP. Its function is as follows. Catalyzes the reversible phosphorylation of UMP to UDP. This chain is Uridylate kinase, found in Cupriavidus necator (strain ATCC 17699 / DSM 428 / KCTC 22496 / NCIMB 10442 / H16 / Stanier 337) (Ralstonia eutropha).